The sequence spans 544 residues: Fructose dehydrogenase large subunit (544 aa).

Position 14–30 (14–30) interacts with FAD; that stretch reads GAGICGSLLAHKLVRNG. His-478 acts as the Proton acceptor in catalysis.

It belongs to the GMC oxidoreductase family. Heterotrimer composed of FdhL, FdhS and FdhC. Requires FAD as cofactor.

The protein resides in the cell membrane. It catalyses the reaction keto-D-fructose + a ubiquinone = 5-dehydro-D-fructose + a ubiquinol. Functionally, catalytic subunit of fructose dehydrogenase, an enzyme that catalyzes the oxidation of D-fructose to produce 5-keto-D-fructose. This chain is Fructose dehydrogenase large subunit (fdhL), found in Gluconobacter japonicus.